The sequence spans 89 residues: Putative membrane protein insertion efficiency factor (89 aa).

Residues V68–L89 form a disordered region. The span at N77 to L89 shows a compositional bias: basic and acidic residues.

Belongs to the UPF0161 family.

It is found in the cell inner membrane. Could be involved in insertion of integral membrane proteins into the membrane. The polypeptide is Putative membrane protein insertion efficiency factor (Burkholderia thailandensis (strain ATCC 700388 / DSM 13276 / CCUG 48851 / CIP 106301 / E264)).